The sequence spans 640 residues: Threonine--tRNA ligase (640 aa).

A TGS domain is found at 1 to 61; sequence MPIITLPNGD…TEDSTLQIIT (61 aa). Positions 242 to 533 are catalytic; that stretch reads DHRKIGKALD…LIEHYAGFMP (292 aa). Zn(2+)-binding residues include cysteine 333, histidine 384, and histidine 510.

Belongs to the class-II aminoacyl-tRNA synthetase family. Homodimer. Requires Zn(2+) as cofactor.

It is found in the cytoplasm. It catalyses the reaction tRNA(Thr) + L-threonine + ATP = L-threonyl-tRNA(Thr) + AMP + diphosphate + H(+). Catalyzes the attachment of threonine to tRNA(Thr) in a two-step reaction: L-threonine is first activated by ATP to form Thr-AMP and then transferred to the acceptor end of tRNA(Thr). Also edits incorrectly charged L-seryl-tRNA(Thr). This is Threonine--tRNA ligase from Acinetobacter baumannii (strain SDF).